The sequence spans 100 residues: Vesicle-associated membrane protein 3 (100 aa).

Residue Ser-2 is modified to N-acetylserine. Residues 2–77 (STGPTAATGS…KRKYWWKNCK (76 aa)) lie on the Cytoplasmic side of the membrane. A v-SNARE coiled-coil homology domain is found at 14–74 (RLQQTQNQVD…AKLKRKYWWK (61 aa)). Glycyl lysine isopeptide (Lys-Gly) (interchain with G-Cter in ubiquitin) cross-links involve residues Lys-66, Lys-68, and Lys-77. The helical; Anchor for type IV membrane protein transmembrane segment at 78–98 (MWAIGITVLVIFIIIIIVWVV) threads the bilayer. The Vesicular segment spans residues 99 to 100 (SS).

It belongs to the synaptobrevin family. Interacts with POPDC1 (via the C-terminus cytoplasmic tail). Interacts with BCAP31; involved in VAMP3 export from the endoplasmic reticulum. Interacts with BAIAP3; this interaction is increased in the presence of calcium. Interacts with PICALM. In terms of processing, ubiquitinated by RNF167 at Lys-66, Lys-68 and Lys-77, regulating the recycling endosome pathway. (Microbial infection) Targeted and hydrolyzed by C.botulinum neurotoxin type B (BoNT/B, botB) which hydrolyzes the 59-Gln-|-Phe-60 bond and probably inhibits neurotransmitter release. Post-translationally, (Microbial infection) Targeted and hydrolyzed by C.botulinum neurotoxin type D (BoNT/D, botD) which hydrolyzes the 42-Lys-|-Leu-43 bond and probably inhibits neurotransmitter release. Note that humans are not known to be infected by C.botulinum type D. In terms of processing, (Microbial infection) Targeted and hydrolyzed by C.botulinum neurotoxin type F (BoNT/F, botF) which hydrolyzes the 41-Gln-|-Lys-42 bond and probably inhibits neurotransmitter release.

It localises to the early endosome membrane. The protein localises to the recycling endosome membrane. Its subcellular location is the synapse. The protein resides in the synaptosome. Its function is as follows. SNARE involved in vesicular transport from the late endosomes to the trans-Golgi network. The protein is Vesicle-associated membrane protein 3 (VAMP3) of Homo sapiens (Human).